A 340-amino-acid chain; its full sequence is Protein-glutamate methylesterase/protein-glutamine glutaminase 1 (340 aa).

The Response regulatory domain maps to 5–122 (KLFIVDDSAL…KVVSELKEKI (118 aa)). D56 is subject to 4-aspartylphosphate. Residues 148-340 (GKNGRQLVVI…AIAEEIAANI (193 aa)) enclose the CheB-type methylesterase domain. Active-site residues include S160, H187, and D285.

This sequence belongs to the CheB family. In terms of processing, phosphorylated by CheA. Phosphorylation of the N-terminal regulatory domain activates the methylesterase activity.

It is found in the cytoplasm. The catalysed reaction is [protein]-L-glutamate 5-O-methyl ester + H2O = L-glutamyl-[protein] + methanol + H(+). The enzyme catalyses L-glutaminyl-[protein] + H2O = L-glutamyl-[protein] + NH4(+). Its function is as follows. Involved in chemotaxis. Part of a chemotaxis signal transduction system that modulates chemotaxis in response to various stimuli. Catalyzes the demethylation of specific methylglutamate residues introduced into the chemoreceptors (methyl-accepting chemotaxis proteins or MCP) by CheR. Also mediates the irreversible deamidation of specific glutamine residues to glutamic acid. The protein is Protein-glutamate methylesterase/protein-glutamine glutaminase 1 of Carboxydothermus hydrogenoformans (strain ATCC BAA-161 / DSM 6008 / Z-2901).